A 131-amino-acid chain; its full sequence is Large ribosomal subunit protein bL17 (131 aa).

Belongs to the bacterial ribosomal protein bL17 family. As to quaternary structure, part of the 50S ribosomal subunit. Contacts protein L32.

The chain is Large ribosomal subunit protein bL17 from Shewanella violacea (strain JCM 10179 / CIP 106290 / LMG 19151 / DSS12).